A 284-amino-acid chain; its full sequence is 4-diphosphocytidyl-2-C-methyl-D-erythritol kinase (284 aa).

Lysine 9 is an active-site residue. 92-102 (PMGGGIGGGSS) contributes to the ATP binding site. Aspartate 134 is an active-site residue.

This sequence belongs to the GHMP kinase family. IspE subfamily.

The enzyme catalyses 4-CDP-2-C-methyl-D-erythritol + ATP = 4-CDP-2-C-methyl-D-erythritol 2-phosphate + ADP + H(+). The protein operates within isoprenoid biosynthesis; isopentenyl diphosphate biosynthesis via DXP pathway; isopentenyl diphosphate from 1-deoxy-D-xylulose 5-phosphate: step 3/6. In terms of biological role, catalyzes the phosphorylation of the position 2 hydroxy group of 4-diphosphocytidyl-2C-methyl-D-erythritol. This is 4-diphosphocytidyl-2-C-methyl-D-erythritol kinase from Stutzerimonas stutzeri (strain A1501) (Pseudomonas stutzeri).